The primary structure comprises 344 residues: 4-dimethylallyltryptophan N-methyltransferase easF (344 aa).

This sequence belongs to the methyltransferase superfamily. Homodimer.

The enzyme catalyses 4-(3-methylbut-2-enyl)-L-tryptophan + S-adenosyl-L-methionine = 4-(3-methylbut-2-enyl)-L-abrine + S-adenosyl-L-homocysteine + H(+). It participates in alkaloid biosynthesis; ergot alkaloid biosynthesis. 4-dimethylallyltryptophan N-methyltransferase; part of the gene cluster that mediates the biosynthesis of fungal ergot alkaloid. DmaW catalyzes the first step of ergot alkaloid biosynthesis by condensing dimethylallyl diphosphate (DMAP) and tryptophan to form 4-dimethylallyl-L-tryptophan. The second step is catalyzed by the methyltransferase easF that methylates 4-dimethylallyl-L-tryptophan in the presence of S-adenosyl-L-methionine, resulting in the formation of 4-dimethylallyl-L-abrine. The catalase easC and the FAD-dependent oxidoreductase easE then transform 4-dimethylallyl-L-abrine to chanoclavine-I which is further oxidized by easD in the presence of NAD(+), resulting in the formation of chanoclavine-I aldehyde. Agroclavine dehydrogenase easG then mediates the conversion of chanoclavine-I aldehyde to agroclavine via a non-enzymatic adduct reaction: the substrate is an iminium intermediate that is formed spontaneously from chanoclavine-I aldehyde in the presence of glutathione. The presence of easA is not required to complete this reaction. Further conversion of agroclavine to paspalic acid is a two-step process involving oxidation of agroclavine to elymoclavine and of elymoclavine to paspalic acid, the second step being performed by the elymoclavine oxidase cloA. Paspalic acid is then further converted to D-lysergic acid. Ergopeptines are assembled from D-lysergic acid and three different amino acids by the D-lysergyl-peptide-synthetases composed each of a monomudular and a trimodular nonribosomal peptide synthetase subunit. LpsB and lpsC encode the monomodular subunits responsible for D-lysergic acid activation and incorporation into the ergopeptine backbone. LpsA1 and A2 subunits encode the trimodular nonribosomal peptide synthetase assembling the tripeptide portion of ergopeptines. LpsA1 is responsible for formation of the major ergopeptine, ergotamine, and lpsA2 for alpha-ergocryptine, the minor ergopeptine of the total alkaloid mixture elaborated by C.purpurea. D-lysergyl-tripeptides are assembled by the nonribosomal peptide synthetases and released as N-(D-lysergyl-aminoacyl)-lactams. Cyclolization of the D-lysergyl-tripeptides is performed by the Fe(2+)/2-ketoglutarate-dependent dioxygenase easH which introduces a hydroxyl group into N-(D-lysergyl-aminoacyl)-lactam at alpha-C of the aminoacyl residue followed by spontaneous condensation with the terminal lactam carbonyl group. The sequence is that of 4-dimethylallyltryptophan N-methyltransferase easF from Claviceps purpurea (strain 20.1) (Ergot fungus).